A 113-amino-acid polypeptide reads, in one-letter code: UPF0482 protein CKO_01577 (113 aa).

The first 28 residues, Met1–Ala28, serve as a signal peptide directing secretion. The disordered stretch occupies residues Arg44–Arg67. The segment covering Ala47–Ser59 has biased composition (basic and acidic residues).

This sequence belongs to the UPF0482 family.

In Citrobacter koseri (strain ATCC BAA-895 / CDC 4225-83 / SGSC4696), this protein is UPF0482 protein CKO_01577.